A 109-amino-acid chain; its full sequence is Biphenyl dioxygenase system ferredoxin subunit (109 aa).

Positions 4–100 (TRVCDRRDVP…IRIEDNDVLV (97 aa)) constitute a Rieske domain. Residues Cys43, His45, Cys63, and His66 each coordinate [2Fe-2S] cluster.

The protein belongs to the bacterial ring-hydroxylating dioxygenase ferredoxin component family. In terms of assembly, this dioxygenase system consists of four proteins: the two subunits of the hydroxylase component (BphA and BphE), a ferredoxin (BphF) and a ferredoxin reductase (BphG).

In terms of biological role, this protein seems to be a 2Fe-2S ferredoxin. In Paraburkholderia xenovorans (strain LB400), this protein is Biphenyl dioxygenase system ferredoxin subunit (bphF).